We begin with the raw amino-acid sequence, 70 residues long: Large ribosomal subunit protein bL31 (70 aa).

4 residues coordinate Zn(2+): Cys-16, Cys-18, Cys-37, and Cys-40.

This sequence belongs to the bacterial ribosomal protein bL31 family. Type A subfamily. Part of the 50S ribosomal subunit. It depends on Zn(2+) as a cofactor.

Its function is as follows. Binds the 23S rRNA. The protein is Large ribosomal subunit protein bL31 of Alteromonas mediterranea (strain DSM 17117 / CIP 110805 / LMG 28347 / Deep ecotype).